Here is a 319-residue protein sequence, read N- to C-terminus: Cytochrome c biogenesis protein CcsA (319 aa).

Helical transmembrane passes span 11–31 (VNFAFGGLLTAMLVYWSSLAF), 34–54 (ISGLNKLAALITLLVNIALAL), 71–91 (LYESLLFLAWGLTFVHLFIES), 97–117 (LIGAVSIPVAMFVTAFASLAL), 142–162 (IMMISYSILILGSLLSILFLI), 227–247 (IIGLGFPLLTIGIVAGAVWAN), 254–274 (WSWDPKETWALITWLIFAAYL), and 288–308 (AILASVGFLVVWICYLGVNFL).

The protein belongs to the CcmF/CycK/Ccl1/NrfE/CcsA family. May interact with Ccs1.

It is found in the plastid. It localises to the chloroplast thylakoid membrane. Its function is as follows. Required during biogenesis of c-type cytochromes (cytochrome c6 and cytochrome f) at the step of heme attachment. The sequence is that of Cytochrome c biogenesis protein CcsA from Porphyra purpurea (Red seaweed).